A 580-amino-acid chain; its full sequence is Arginine--tRNA ligase (580 aa).

The short motif at 137–147 is the 'HIGH' region element; it reads ANPTGPLHIGH.

Belongs to the class-I aminoacyl-tRNA synthetase family. Monomer.

Its subcellular location is the cytoplasm. The catalysed reaction is tRNA(Arg) + L-arginine + ATP = L-arginyl-tRNA(Arg) + AMP + diphosphate. The protein is Arginine--tRNA ligase of Anaplasma phagocytophilum (strain HZ).